The primary structure comprises 283 residues: Protein boule-like (283 aa).

The segment at 1–25 (MQTDSLSPSPNPVSPVPLNNPTSAP) is disordered. Residues 33–110 (NRIFVGGIDF…KKLNIGPAIR (78 aa)) form the RRM domain. One can recognise a DAZ domain in the interval 160–184 (PSRSVCSSPVMVAQPIYQQPAYHYQ).

The protein belongs to the RRM DAZ family. Interacts with DAZ1 and DAZL. As to expression, testis specific. Not expressed in early embryos, primordial germ cells and spermatogonial cells. First expressed in the cytoplasm of spermatocytes and then persists through meiosis.

Its subcellular location is the cytoplasm. Functionally, probable RNA-binding protein, which may be required during spermatogenesis. May act by binding to the 3'-UTR of mRNAs and regulating their translation. This is Protein boule-like (BOLL) from Homo sapiens (Human).